Reading from the N-terminus, the 257-residue chain is Ribonuclease HII (257 aa).

The region spanning 72–257 is the RNase H type-2 domain; sequence TYIAGIDEVG…FAPIKDMIQK (186 aa). Residues Asp78, Glu79, and Asp170 each coordinate a divalent metal cation.

It belongs to the RNase HII family. Mn(2+) is required as a cofactor. It depends on Mg(2+) as a cofactor.

It is found in the cytoplasm. The enzyme catalyses Endonucleolytic cleavage to 5'-phosphomonoester.. Its function is as follows. Endonuclease that specifically degrades the RNA of RNA-DNA hybrids. This chain is Ribonuclease HII, found in Bacillus cereus (strain B4264).